We begin with the raw amino-acid sequence, 524 residues long: Na(+)/H(+) antiporter NhaB (524 aa).

9 helical membrane-spanning segments follow: residues 13 to 33 (FLGN…IINP), 98 to 118 (LLLV…LFVF), 140 to 160 (AFLS…SVSV), 239 to 259 (FFIR…LVCL), 304 to 324 (AIIG…VGLV), 325 to 345 (GLSV…HSLG), 358 to 378 (LTVF…TPII), 448 to 468 (ATPN…APLI), and 479 to 499 (ALPY…FLLV).

Belongs to the NhaB Na(+)/H(+) (TC 2.A.34) antiporter family.

The protein resides in the cell inner membrane. It catalyses the reaction 2 Na(+)(in) + 3 H(+)(out) = 2 Na(+)(out) + 3 H(+)(in). In terms of biological role, na(+)/H(+) antiporter that extrudes sodium in exchange for external protons. This Yersinia pseudotuberculosis serotype I (strain IP32953) protein is Na(+)/H(+) antiporter NhaB.